A 1489-amino-acid chain; its full sequence is DNA-directed RNA polymerase subunit beta (1489 aa).

Belongs to the RNA polymerase beta chain family. In terms of assembly, the RNAP catalytic core consists of 2 alpha, 1 beta, 1 beta' and 1 omega subunit. When a sigma factor is associated with the core the holoenzyme is formed, which can initiate transcription.

It carries out the reaction RNA(n) + a ribonucleoside 5'-triphosphate = RNA(n+1) + diphosphate. Functionally, DNA-dependent RNA polymerase catalyzes the transcription of DNA into RNA using the four ribonucleoside triphosphates as substrates. This Koribacter versatilis (strain Ellin345) protein is DNA-directed RNA polymerase subunit beta.